The primary structure comprises 133 residues: MKEKPAVEVRLDKWLWAARFYKTRALAREMIEGGKVHYNGQRSKPSKIVELNATLTLRQGNDERTVIVKAITEQRRPASEAALLYEETAESVEKREKMALARKLNALTMPHPDRRPDKKERRDLLRFKHGDSE.

An S4 RNA-binding domain is found at 9–71; sequence VRLDKWLWAA…DERTVIVKAI (63 aa). Residues 105–133 form a disordered region; that stretch reads NALTMPHPDRRPDKKERRDLLRFKHGDSE. Basic and acidic residues predominate over residues 111 to 133; sequence HPDRRPDKKERRDLLRFKHGDSE.

This sequence belongs to the HSP15 family. As to quaternary structure, monomer.

In terms of biological role, involved in the recycling of free 50S ribosomal subunits that still carry a nascent chain. Binds RNA more specifically than DNA. Binds with very high affinity to the free 50S ribosomal subunit. Does not bind it when it is part of the 70S ribosome. This chain is Heat shock protein 15 (hslR), found in Escherichia coli O157:H7.